Here is a 228-residue protein sequence, read N- to C-terminus: Serum amyloid P-component (228 aa).

The signal sequence occupies residues Met1–Ala20. Positions Asn25–Asp224 constitute a Pentraxin (PTX) domain. N-linked (GlcNAc...) asparagine glycosylation occurs at Asn52. Cys56 and Cys115 are joined by a disulfide. Ca(2+) is bound by residues Asp78, Asn79, Glu156, Gln157, Asp158, and Gln168.

This sequence belongs to the pentraxin family. As to quaternary structure, homopentamer. Pentraxin (or pentaxin) have a discoid arrangement of 5 non-covalently bound subunits. Requires Ca(2+) as cofactor.

The protein localises to the secreted. The polypeptide is Serum amyloid P-component (Apcs) (Rattus norvegicus (Rat)).